The primary structure comprises 346 residues: N-acetyl-gamma-glutamyl-phosphate reductase (346 aa).

The active site involves Cys-151.

It belongs to the NAGSA dehydrogenase family. Type 1 subfamily.

The protein localises to the cytoplasm. It catalyses the reaction N-acetyl-L-glutamate 5-semialdehyde + phosphate + NADP(+) = N-acetyl-L-glutamyl 5-phosphate + NADPH + H(+). It functions in the pathway amino-acid biosynthesis; L-arginine biosynthesis; N(2)-acetyl-L-ornithine from L-glutamate: step 3/4. Its function is as follows. Catalyzes the NADPH-dependent reduction of N-acetyl-5-glutamyl phosphate to yield N-acetyl-L-glutamate 5-semialdehyde. The sequence is that of N-acetyl-gamma-glutamyl-phosphate reductase from Ehrlichia canis (strain Jake).